We begin with the raw amino-acid sequence, 506 residues long: Bifunctional purine biosynthesis protein PurH (506 aa).

The MGS-like domain occupies 1-146; the sequence is MARLALLSVS…KNFAHLTVLC (146 aa).

It belongs to the PurH family.

The catalysed reaction is (6R)-10-formyltetrahydrofolate + 5-amino-1-(5-phospho-beta-D-ribosyl)imidazole-4-carboxamide = 5-formamido-1-(5-phospho-D-ribosyl)imidazole-4-carboxamide + (6S)-5,6,7,8-tetrahydrofolate. It catalyses the reaction IMP + H2O = 5-formamido-1-(5-phospho-D-ribosyl)imidazole-4-carboxamide. The protein operates within purine metabolism; IMP biosynthesis via de novo pathway; 5-formamido-1-(5-phospho-D-ribosyl)imidazole-4-carboxamide from 5-amino-1-(5-phospho-D-ribosyl)imidazole-4-carboxamide (10-formyl THF route): step 1/1. It functions in the pathway purine metabolism; IMP biosynthesis via de novo pathway; IMP from 5-formamido-1-(5-phospho-D-ribosyl)imidazole-4-carboxamide: step 1/1. This Nostoc sp. (strain PCC 7120 / SAG 25.82 / UTEX 2576) protein is Bifunctional purine biosynthesis protein PurH.